A 168-amino-acid polypeptide reads, in one-letter code: MINKRSLLASFINLPYSLFITFKGMYITLRYMFKPKVTLNYPLEKNPLSTRFRGEHALRTYKNGEERCIACKLCEAICPAQAITIEAQERDTDNSRRTVRYDIDMTKCIYCGFCQEACPVDAIVEGPNFEYATETREELMYNKSKLLHNGQIWEEAIDLRIKKNSKFY.

4Fe-4S ferredoxin-type domains follow at residues 58 to 88 (LRTYKNGEERCIACKLCEAICPAQAITIEAQ) and 99 to 128 (VRYDIDMTKCIYCGFCQEACPVDAIVEGPN). [4Fe-4S] cluster is bound by residues Cys68, Cys71, Cys74, Cys78, Cys108, Cys111, Cys114, and Cys118.

It belongs to the complex I 23 kDa subunit family. NDH-1 is composed of 14 different subunits. Subunits NuoA, H, J, K, L, M, N constitute the membrane sector of the complex. It depends on [4Fe-4S] cluster as a cofactor.

It localises to the cell inner membrane. The catalysed reaction is a quinone + NADH + 5 H(+)(in) = a quinol + NAD(+) + 4 H(+)(out). Its function is as follows. NDH-1 shuttles electrons from NADH, via FMN and iron-sulfur (Fe-S) centers, to quinones in the respiratory chain. The immediate electron acceptor for the enzyme in this species is believed to be ubiquinone. Couples the redox reaction to proton translocation (for every two electrons transferred, four hydrogen ions are translocated across the cytoplasmic membrane), and thus conserves the redox energy in a proton gradient. This chain is NADH-quinone oxidoreductase subunit I, found in Ehrlichia ruminantium (strain Gardel).